An 857-amino-acid polypeptide reads, in one-letter code: Linoleate 9S-lipoxygenase 6 (857 aa).

One can recognise a PLAT domain in the interval 26-156 (NALDFTDLAG…RYKSDRIFFA (131 aa)). Positions 159–857 (PYLPSETPEL…GKGIPNSVSI (699 aa)) constitute a Lipoxygenase domain. The interval 205 to 243 (NPDQGEQNVRTTLGGSADYPYPRRGRTGRPPTRTDPKSE) is disordered. Over residues 208-218 (QGEQNVRTTLG) the composition is skewed to polar residues. Fe cation is bound by residues H518, H523, H709, N713, and I857.

Belongs to the lipoxygenase family. In terms of assembly, monomer. Fe cation serves as cofactor. In terms of tissue distribution, expressed in tubers and roots. Detected in leaves, petioles and stems.

Its subcellular location is the cytoplasm. The catalysed reaction is (9Z,12Z)-octadecadienoate + O2 = (9S)-hydroperoxy-(10E,12Z)-octadecadienoate. Its pathway is lipid metabolism; oxylipin biosynthesis. Functionally, plant lipoxygenases may be involved in a number of diverse aspects of plant physiology including growth and development, pest resistance, and senescence or responses to wounding. Catalyzes the hydroperoxidation of lipids containing a cis,cis-1,4-pentadiene structure. Linoleic and linolenic acids are the preferred substrates, but is also active with arachidonic acid. The products are almost exclusively the S enantiomers. The sequence is that of Linoleate 9S-lipoxygenase 6 (LOX1.6) from Solanum tuberosum (Potato).